Consider the following 270-residue polypeptide: Glutamate racemase (270 aa).

Residues 10–11 and 42–43 each bind substrate; these read DS and YG. The active-site Proton donor/acceptor is Cys-73. Substrate is bound at residue 74–75; that stretch reads NT. Cys-184 serves as the catalytic Proton donor/acceptor. Residue 185–186 participates in substrate binding; the sequence is TH.

The protein belongs to the aspartate/glutamate racemases family.

It catalyses the reaction L-glutamate = D-glutamate. The protein operates within cell wall biogenesis; peptidoglycan biosynthesis. Its function is as follows. Provides the (R)-glutamate required for cell wall biosynthesis. The protein is Glutamate racemase of Geobacter metallireducens (strain ATCC 53774 / DSM 7210 / GS-15).